The primary structure comprises 409 residues: Arginine deiminase (409 aa).

The active-site Amidino-cysteine intermediate is the Cys399.

Belongs to the arginine deiminase family.

Its subcellular location is the cytoplasm. It catalyses the reaction L-arginine + H2O = L-citrulline + NH4(+). It functions in the pathway amino-acid degradation; L-arginine degradation via ADI pathway; carbamoyl phosphate from L-arginine: step 1/2. In Streptococcus gordonii (strain Challis / ATCC 35105 / BCRC 15272 / CH1 / DL1 / V288), this protein is Arginine deiminase.